We begin with the raw amino-acid sequence, 494 residues long: Probable capsid protein (494 aa).

Positions 120–123 (RPKR) match the Nuclear localization signal motif. The CCHC-type zinc-finger motif lies at 418–435 (CRCWVCNIEGHYANECPN). The tract at residues 474–494 (LSSSDSELDDTCEESSSEESE) is disordered. A compositionally biased stretch (acidic residues) spans 479–494 (SELDDTCEESSSEESE).

The protein belongs to the caulimoviridae capsid protein family. As to quaternary structure, interacts (via nuclear localization signal) with host importin alpha.

The protein resides in the virion. It localises to the host nucleus. Self assembles to form an icosahedral capsid, about 50 nm in diameter, nm, composed of 420 subunits of the viral capsid protein. The capsid encapsulates the genomic dsDNA. Following virus entry into host cell, provides nuclear import of the viral genome. Virus particles do not enter the nucleus, but dock at the nuclear membrane through the interaction with host importins. In Dianthus caryophyllus (Carnation), this protein is Probable capsid protein.